Consider the following 117-residue polypeptide: Small ribosomal subunit protein eS25 (117 aa).

The tract at residues 1 to 34 (MPPKKDPKGGKAPPSKKKEGSGGGKAKKKKWSKG) is disordered. The span at 25 to 34 (KAKKKKWSKG) shows a compositional bias: basic residues.

The protein belongs to the eukaryotic ribosomal protein eS25 family.

This Caenorhabditis elegans protein is Small ribosomal subunit protein eS25 (rps-25).